The chain runs to 404 residues: Cysteine desulfurase IscS (404 aa).

Residues 75–76 (AT), asparagine 155, glutamine 183, and 203–205 (TSH) each bind pyridoxal 5'-phosphate. An N6-(pyridoxal phosphate)lysine modification is found at lysine 206. Position 243 (threonine 243) interacts with pyridoxal 5'-phosphate. Residue cysteine 328 is the Cysteine persulfide intermediate of the active site. [2Fe-2S] cluster is bound at residue cysteine 328.

The protein belongs to the class-V pyridoxal-phosphate-dependent aminotransferase family. NifS/IscS subfamily. As to quaternary structure, homodimer. Forms a heterotetramer with IscU, interacts with other sulfur acceptors. Pyridoxal 5'-phosphate serves as cofactor.

It is found in the cytoplasm. It carries out the reaction (sulfur carrier)-H + L-cysteine = (sulfur carrier)-SH + L-alanine. The protein operates within cofactor biosynthesis; iron-sulfur cluster biosynthesis. In terms of biological role, master enzyme that delivers sulfur to a number of partners involved in Fe-S cluster assembly, tRNA modification or cofactor biosynthesis. Catalyzes the removal of elemental sulfur atoms from cysteine to produce alanine. Functions as a sulfur delivery protein for Fe-S cluster synthesis onto IscU, an Fe-S scaffold assembly protein, as well as other S acceptor proteins. The polypeptide is Cysteine desulfurase IscS (Photobacterium profundum (strain SS9)).